We begin with the raw amino-acid sequence, 355 residues long: Cobalt-precorrin-5B C(1)-methyltransferase (355 aa).

The protein belongs to the CbiD family.

The catalysed reaction is Co-precorrin-5B + S-adenosyl-L-methionine = Co-precorrin-6A + S-adenosyl-L-homocysteine. It functions in the pathway cofactor biosynthesis; adenosylcobalamin biosynthesis; cob(II)yrinate a,c-diamide from sirohydrochlorin (anaerobic route): step 6/10. Its function is as follows. Catalyzes the methylation of C-1 in cobalt-precorrin-5B to form cobalt-precorrin-6A. This is Cobalt-precorrin-5B C(1)-methyltransferase from Sulfolobus acidocaldarius (strain ATCC 33909 / DSM 639 / JCM 8929 / NBRC 15157 / NCIMB 11770).